A 340-amino-acid chain; its full sequence is Uroporphyrinogen decarboxylase (340 aa).

Substrate is bound by residues 23-27 (RQAGR), Asp72, Tyr147, Thr202, and His316.

It belongs to the uroporphyrinogen decarboxylase family. As to quaternary structure, homodimer.

The protein resides in the cytoplasm. It carries out the reaction uroporphyrinogen III + 4 H(+) = coproporphyrinogen III + 4 CO2. It functions in the pathway porphyrin-containing compound metabolism; protoporphyrin-IX biosynthesis; coproporphyrinogen-III from 5-aminolevulinate: step 4/4. Its function is as follows. Catalyzes the decarboxylation of four acetate groups of uroporphyrinogen-III to yield coproporphyrinogen-III. In Geobacter sulfurreducens (strain ATCC 51573 / DSM 12127 / PCA), this protein is Uroporphyrinogen decarboxylase.